Consider the following 90-residue polypeptide: Small ribosomal subunit protein bS16 (90 aa).

It belongs to the bacterial ribosomal protein bS16 family.

The sequence is that of Small ribosomal subunit protein bS16 from Moorella thermoacetica (strain ATCC 39073 / JCM 9320).